Reading from the N-terminus, the 787-residue chain is Lysine-specific demethylase JMJ13 (787 aa).

Positions 103 to 144 constitute a JmjN domain; the sequence is CPVYRPTKEEFEDPLTYLQKIFPEASKYGICKIVSPLTATVP. The JmjC domain maps to 250 to 420; that stretch reads SSKWNLNKVS…FGAIASCRYA (171 aa). Fe cation contacts are provided by H293, E295, and H388. Zn(2+) contacts are provided by C500, C503, C514, C516, H519, C522, H525, and C534. The C4HCHC zinc-finger motif lies at 500 to 551; it reads CSLCKRDCYLAFINCECYSHPVCLRHDVKKLDLPCGTTHTLYLRDNIEDMEA. The segment at 500–551 adopts a C5HC2 zinc-finger fold; that stretch reads CSLCKRDCYLAFINCECYSHPVCLRHDVKKLDLPCGTTHTLYLRDNIEDMEA. An FYR N-terminal domain is found at 617–675; it reads VMSYEANASCISSVADDYECSDYVNRRANCSSSSDSKLSEEVACSSSKKTRFFPVVQDE. The FYR C-terminal domain maps to 677 to 756; it reads LVADQESDGS…ELVISNRKET (80 aa). Residues 712–769 are disordered; the sequence is ESDHHQELKRLKKSHHHEGRYSSSSSVSRQEEEEDELVISNRKETQQQSDVKMQKKRI. The short motif at 752-759 is the Nuclear localization signal element; sequence NRKETQQQ.

This sequence belongs to the JARID1 histone demethylase family. Requires Fe(2+) as cofactor. In terms of tissue distribution, mostly expressed in leaves, and, to a lower extent, in inflorescences, roots, siliques and stems.

The protein localises to the nucleus. It carries out the reaction N(6),N(6),N(6)-trimethyl-L-lysyl(27)-[histone H3] + 2-oxoglutarate + O2 = N(6),N(6)-dimethyl-L-lysyl(27)-[histone H3] + formaldehyde + succinate + CO2. Its function is as follows. Histone demethylase that demethylates 'Lys-27' (H3K27me) of histone H3 with a specific activity for H3K27me3 and involved in the regulation of gene expression. Acts as a temperature and photoperiod dependent flowering repressor. This chain is Lysine-specific demethylase JMJ13, found in Arabidopsis thaliana (Mouse-ear cress).